Reading from the N-terminus, the 537-residue chain is Efflux pump ustT (537 aa).

Residues 1–25 (MAKEAQSLHELDNMKEKEVDQEKKA) show a composition bias toward basic and acidic residues. The tract at residues 1–50 (MAKEAQSLHELDNMKEKEVDQEKKAPTSVGDQEEHDDPKKQASHSQNVSE) is disordered. Asn-47 carries N-linked (GlcNAc...) asparagine glycosylation. 8 helical membrane passes run 71–91 (PLAMAVIMVAISMGMFLVSLL), 104–124 (WVYMSLVFIFVIGSAVGAGAM), 137–157 (GIGLGGVLSGSTILIAENAPL), 162–182 (MFLGILMATMSISAIVGPLIG), 193–213 (WCFILNIPIGGAIIAVLFFFV), 236–256 (LGSALLLPAVVCLILALQWAG), 266–286 (IILLFVFGGLLSIGFVVSQML), and 304–324 (FGSFLFSAMTGGAMLVVTYWI). The N-linked (GlcNAc...) asparagine glycan is linked to Asn-333. Helical transmembrane passes span 339 to 359 (AGIRTIALVLSQAVGAIMGGG), 363 to 383 (LIGYPPPIMMISATFIAVGAG), 397 to 417 (WIGYQILMGLGLGFGTQQASL), and 430 to 450 (TAISLIFFGMQLGGSIFVCIG). N-linked (GlcNAc...) asparagine glycosylation occurs at Asn-501. A helical transmembrane segment spans residues 507–527 (TFYVALAAGITSMLSAFLVQW).

Belongs to the major facilitator superfamily. TCR/Tet family.

The protein resides in the cell membrane. Functionally, efflux pump; part of the gene cluster that mediates the biosynthesis of ustilaginoidins, dimeric gamma-naphthopyrones isolated from different fungal species. This is Efflux pump ustT from Ustilaginoidea virens (Rice false smut fungus).